Here is a 242-residue protein sequence, read N- to C-terminus: Probable transcriptional regulatory protein NMB1648 (242 aa).

It belongs to the TACO1 family.

The protein localises to the cytoplasm. This is Probable transcriptional regulatory protein NMB1648 from Neisseria meningitidis serogroup B (strain ATCC BAA-335 / MC58).